A 953-amino-acid chain; its full sequence is Coatomer subunit beta (953 aa).

N-acetylthreonine is present on Thr-2. HEAT repeat units follow at residues 96–131, 132–168, 240–276, 277–314, 316–353, and 396–433; these read HEMILVCDAYRKDLQHPNEFIRGSTLRFLCKLKEAE, LLEPLMPAIRACLEHRHSYVRRNAVLAIYTIYRNFEH, SERARFIRCIYNLLQSSSPAVKYEAAGTLVTLSSAPT, AIKAAAQCYIDLIIKESDNNVKLIVLDRLIELKEHPAH, RVLQDLVMDILRVLSTPDLEVRKKTLQLALDLVSSRNV, and DMAANVIPVLMEFLSDSNEAAAADVLEFVREAIQRFDN. At Lys-494 the chain carries N6-acetyllysine.

As to quaternary structure, oligomeric complex that consists of at least the alpha, beta, beta', gamma, delta, epsilon and zeta subunits. Interacts with ARF1 (myristoylated); this interaction is required for binding of COPB1 to Golgi membranes. Interacts with CAPN8 and PRKCE. Interacts with SCYL1. Interacts with COPG1. Interacts (via trunk domain) with ARF1 (via switch I region); the interaction is direct. Interacts with KCNK2 (via N-terminus); this interaction increases the channel-mediated whole cell currents and promotes plasma membrane expression of KCNK2. Interacts with STX17. Interacts with TMEM115. Interacts with TMEM41B. Post-translationally, proteolytically cleaved between Ser-528 and Ser-529 by CAPN8.

The protein localises to the cytoplasm. It localises to the cytosol. It is found in the golgi apparatus membrane. Its subcellular location is the cytoplasmic vesicle. The protein resides in the COPI-coated vesicle membrane. The protein localises to the cell membrane. It localises to the endoplasmic reticulum-Golgi intermediate compartment. The coatomer is a cytosolic protein complex that binds to dilysine motifs and reversibly associates with Golgi non-clathrin-coated vesicles, which further mediate biosynthetic protein transport from the ER, via the Golgi up to the trans Golgi network. Coatomer complex is required for budding from Golgi membranes, and is essential for the retrograde Golgi-to-ER transport of dilysine-tagged proteins. In mammals, the coatomer can only be recruited by membranes associated to ADP-ribosylation factors (ARFs), which are small GTP-binding proteins; the complex also influences the Golgi structural integrity, as well as the processing, activity, and endocytic recycling of LDL receptors. Involved in the Golgi disassembly and reassembly processes during cell cycle. Plays a functional role in facilitating the transport of kappa-type opioid receptor mRNAs into axons and enhances translation of these proteins. Required for limiting lipid storage in lipid droplets. Involved in lipid homeostasis by regulating the presence of perilipin family members PLIN2 and PLIN3 at the lipid droplet surface and promoting the association of adipocyte surface triglyceride lipase (PNPLA2) with the lipid droplet to mediate lipolysis. Involved in autophagy by playing a role in early endosome function. Plays a role in organellar compartmentalization of secretory compartments including endoplasmic reticulum (ER)-Golgi intermediate compartment (ERGIC), Golgi, trans-Golgi network (TGN) and recycling endosomes, and in biosynthetic transport of CAV1. The chain is Coatomer subunit beta (COPB1) from Bos taurus (Bovine).